We begin with the raw amino-acid sequence, 272 residues long: Urease accessory protein UreD (272 aa).

This sequence belongs to the UreD family. UreD, UreF and UreG form a complex that acts as a GTP-hydrolysis-dependent molecular chaperone, activating the urease apoprotein by helping to assemble the nickel containing metallocenter of UreC. The UreE protein probably delivers the nickel.

It localises to the cytoplasm. Required for maturation of urease via the functional incorporation of the urease nickel metallocenter. This chain is Urease accessory protein UreD, found in Opitutus terrae (strain DSM 11246 / JCM 15787 / PB90-1).